Here is a 62-residue protein sequence, read N- to C-terminus: Photosystem II reaction center protein Z (62 aa).

2 helical membrane passes run 8 to 28 (AVFALIATSLILVIGVPVVFA) and 41 to 61 (FSGTSLWIGLVFLVGILNSLI).

The protein belongs to the PsbZ family. In terms of assembly, PSII is composed of 1 copy each of membrane proteins PsbA, PsbB, PsbC, PsbD, PsbE, PsbF, PsbH, PsbI, PsbJ, PsbK, PsbL, PsbM, PsbT, PsbY, PsbZ, Psb30/Ycf12, at least 3 peripheral proteins of the oxygen-evolving complex and a large number of cofactors. It forms dimeric complexes.

Its subcellular location is the plastid. It localises to the chloroplast thylakoid membrane. In terms of biological role, may control the interaction of photosystem II (PSII) cores with the light-harvesting antenna, regulates electron flow through the 2 photosystem reaction centers. PSII is a light-driven water plastoquinone oxidoreductase, using light energy to abstract electrons from H(2)O, generating a proton gradient subsequently used for ATP formation. The chain is Photosystem II reaction center protein Z from Piper cenocladum (Ant piper).